The following is a 409-amino-acid chain: Gamma-glutamyl phosphate reductase (409 aa).

This sequence belongs to the gamma-glutamyl phosphate reductase family.

It localises to the cytoplasm. The catalysed reaction is L-glutamate 5-semialdehyde + phosphate + NADP(+) = L-glutamyl 5-phosphate + NADPH + H(+). It participates in amino-acid biosynthesis; L-proline biosynthesis; L-glutamate 5-semialdehyde from L-glutamate: step 2/2. In terms of biological role, catalyzes the NADPH-dependent reduction of L-glutamate 5-phosphate into L-glutamate 5-semialdehyde and phosphate. The product spontaneously undergoes cyclization to form 1-pyrroline-5-carboxylate. This chain is Gamma-glutamyl phosphate reductase, found in Bartonella tribocorum (strain CIP 105476 / IBS 506).